A 216-amino-acid polypeptide reads, in one-letter code: Uracil phosphoribosyltransferase (216 aa).

Residues arginine 85, arginine 110, and 135-143 (DPMVATGYS) contribute to the 5-phospho-alpha-D-ribose 1-diphosphate site. Uracil-binding positions include isoleucine 200 and 205-207 (GDA). Aspartate 206 is a binding site for 5-phospho-alpha-D-ribose 1-diphosphate.

The protein belongs to the UPRTase family. Mg(2+) is required as a cofactor.

The catalysed reaction is UMP + diphosphate = 5-phospho-alpha-D-ribose 1-diphosphate + uracil. Its pathway is pyrimidine metabolism; UMP biosynthesis via salvage pathway; UMP from uracil: step 1/1. With respect to regulation, allosterically activated by GTP. Functionally, catalyzes the conversion of uracil and 5-phospho-alpha-D-ribose 1-diphosphate (PRPP) to UMP and diphosphate. The protein is Uracil phosphoribosyltransferase of Paraburkholderia phytofirmans (strain DSM 17436 / LMG 22146 / PsJN) (Burkholderia phytofirmans).